The sequence spans 416 residues: Putative UV-damage repair protein UvrX (416 aa).

A UmuC domain is found at 12-196; that stretch reads ILCVDMKSFY…RPLSKMWGIG (185 aa). Mg(2+)-binding residues include Asp16 and Asp115. Glu116 is a catalytic residue.

It belongs to the DNA polymerase type-Y family. Mg(2+) serves as cofactor.

This is Putative UV-damage repair protein UvrX (uvrX) from Bacillus subtilis (strain 168).